Reading from the N-terminus, the 185-residue chain is FK506-binding protein 2 (185 aa).

The N-terminal stretch at 1–20 (MQGLLLSLSLLASAAVGVLA) is a signal peptide. Residues 41-129 (GDKINVHYKG…VFETELVGIE (89 aa)) form the PPIase FKBP-type domain. A Prevents secretion from ER motif is present at residues 182-185 (HNEL).

This sequence belongs to the FKBP-type PPIase family. FKBP2 subfamily.

Its subcellular location is the endoplasmic reticulum. It carries out the reaction [protein]-peptidylproline (omega=180) = [protein]-peptidylproline (omega=0). Inhibited by both FK506 and rapamycin. Functionally, PPIases accelerate the folding of proteins. It catalyzes the cis-trans isomerization of proline imidic peptide bonds in oligopeptides. The sequence is that of FK506-binding protein 2 (FPR2) from Podospora anserina (Pleurage anserina).